A 437-amino-acid chain; its full sequence is Phosphoribosylamine--glycine ligase (437 aa).

The ATP-grasp domain occupies 110 to 322 (KNLLRSADIP…LVEVMQAVVD (213 aa)). 142 to 203 (EPTDPVNVVV…EERLTGPEVS (62 aa)) contributes to the ATP binding site. Residues glutamate 292 and asparagine 294 each contribute to the Mg(2+) site.

This sequence belongs to the GARS family. Mg(2+) is required as a cofactor. Mn(2+) serves as cofactor.

The enzyme catalyses 5-phospho-beta-D-ribosylamine + glycine + ATP = N(1)-(5-phospho-beta-D-ribosyl)glycinamide + ADP + phosphate + H(+). The protein operates within purine metabolism; IMP biosynthesis via de novo pathway; N(1)-(5-phospho-D-ribosyl)glycinamide from 5-phospho-alpha-D-ribose 1-diphosphate: step 2/2. The chain is Phosphoribosylamine--glycine ligase from Rhodopirellula baltica (strain DSM 10527 / NCIMB 13988 / SH1).